Here is a 123-residue protein sequence, read N- to C-terminus: Histone H2B.1, embryonic (123 aa).

A disordered region spans residues Met-1–Lys-32. Over residues Lys-10–Lys-32 the composition is skewed to basic residues. Ser-110 is a glycosylation site (O-linked (GlcNAc) serine). Lys-118 is covalently cross-linked (Glycyl lysine isopeptide (Lys-Gly) (interchain with G-Cter in ubiquitin)).

Belongs to the histone H2B family. In terms of assembly, the nucleosome is a histone octamer containing two molecules each of H2A, H2B, H3 and H4 assembled in one H3-H4 heterotetramer and two H2A-H2B heterodimers. The octamer wraps approximately 147 bp of DNA. Post-translationally, monoubiquitination of Lys-118 gives a specific tag for epigenetic transcriptional activation and is also prerequisite for histone H3 'Lys-4' and 'Lys-79' methylation. GlcNAcylation at Ser-110 promotes monoubiquitination of Lys-118. It fluctuates in response to extracellular glucose, and associates with transcribed genes.

The protein localises to the nucleus. It localises to the chromosome. Functionally, core component of nucleosome. Nucleosomes wrap and compact DNA into chromatin, limiting DNA accessibility to the cellular machineries which require DNA as a template. Histones thereby play a central role in transcription regulation, DNA repair, DNA replication and chromosomal stability. DNA accessibility is regulated via a complex set of post-translational modifications of histones, also called histone code, and nucleosome remodeling. This is Histone H2B.1, embryonic from Psammechinus miliaris (Green sea urchin).